A 492-amino-acid chain; its full sequence is Endoglucanase 15 (492 aa).

Positions 1–30 are cleaved as a signal peptide; sequence MSCISSQCFITIKSICIVLLLSITCGAVSA. The Nucleophile role is filled by Asp-86. Catalysis depends on residues His-414, Asp-466, and Glu-475.

Belongs to the glycosyl hydrolase 9 (cellulase E) family.

Its subcellular location is the secreted. The enzyme catalyses Endohydrolysis of (1-&gt;4)-beta-D-glucosidic linkages in cellulose, lichenin and cereal beta-D-glucans.. The protein is Endoglucanase 15 of Arabidopsis thaliana (Mouse-ear cress).